A 297-amino-acid chain; its full sequence is 4-hydroxy-tetrahydrodipicolinate synthase (297 aa).

T45 is a pyruvate binding site. Y133 functions as the Proton donor/acceptor in the catalytic mechanism. K161 functions as the Schiff-base intermediate with substrate in the catalytic mechanism. A pyruvate-binding site is contributed by I205.

It belongs to the DapA family. Homotetramer; dimer of dimers.

It is found in the cytoplasm. It catalyses the reaction L-aspartate 4-semialdehyde + pyruvate = (2S,4S)-4-hydroxy-2,3,4,5-tetrahydrodipicolinate + H2O + H(+). It participates in amino-acid biosynthesis; L-lysine biosynthesis via DAP pathway; (S)-tetrahydrodipicolinate from L-aspartate: step 3/4. Catalyzes the condensation of (S)-aspartate-beta-semialdehyde [(S)-ASA] and pyruvate to 4-hydroxy-tetrahydrodipicolinate (HTPA). The sequence is that of 4-hydroxy-tetrahydrodipicolinate synthase from Dichelobacter nodosus (strain VCS1703A).